Reading from the N-terminus, the 387-residue chain is Cobalt-precorrin-5B C(1)-methyltransferase (387 aa).

Belongs to the CbiD family.

It carries out the reaction Co-precorrin-5B + S-adenosyl-L-methionine = Co-precorrin-6A + S-adenosyl-L-homocysteine. Its pathway is cofactor biosynthesis; adenosylcobalamin biosynthesis; cob(II)yrinate a,c-diamide from sirohydrochlorin (anaerobic route): step 6/10. In terms of biological role, catalyzes the methylation of C-1 in cobalt-precorrin-5B to form cobalt-precorrin-6A. The sequence is that of Cobalt-precorrin-5B C(1)-methyltransferase from Desulfitobacterium hafniense (strain Y51).